We begin with the raw amino-acid sequence, 238 residues long: tRNA (guanine-N(7)-)-methyltransferase (238 aa).

S-adenosyl-L-methionine-binding residues include glutamate 68, glutamate 93, aspartate 120, and aspartate 143. The active site involves aspartate 143. Residues lysine 147, aspartate 179, and 216–219 (TKFE) each bind substrate.

Belongs to the class I-like SAM-binding methyltransferase superfamily. TrmB family.

It carries out the reaction guanosine(46) in tRNA + S-adenosyl-L-methionine = N(7)-methylguanosine(46) in tRNA + S-adenosyl-L-homocysteine. It participates in tRNA modification; N(7)-methylguanine-tRNA biosynthesis. Catalyzes the formation of N(7)-methylguanine at position 46 (m7G46) in tRNA. The protein is tRNA (guanine-N(7)-)-methyltransferase of Marinobacter nauticus (strain ATCC 700491 / DSM 11845 / VT8) (Marinobacter aquaeolei).